Here is a 299-residue protein sequence, read N- to C-terminus: Pyridoxal 5'-phosphate synthase subunit PdxS (299 aa).

Asp24 serves as a coordination point for D-ribose 5-phosphate. Lys81 functions as the Schiff-base intermediate with D-ribose 5-phosphate in the catalytic mechanism. Gly153 contacts D-ribose 5-phosphate. Arg165 is a D-glyceraldehyde 3-phosphate binding site. D-ribose 5-phosphate is bound by residues Gly219 and 240–241 (GS).

It belongs to the PdxS/SNZ family. As to quaternary structure, in the presence of PdxT, forms a dodecamer of heterodimers.

The enzyme catalyses aldehydo-D-ribose 5-phosphate + D-glyceraldehyde 3-phosphate + L-glutamine = pyridoxal 5'-phosphate + L-glutamate + phosphate + 3 H2O + H(+). It participates in cofactor biosynthesis; pyridoxal 5'-phosphate biosynthesis. Functionally, catalyzes the formation of pyridoxal 5'-phosphate from ribose 5-phosphate (RBP), glyceraldehyde 3-phosphate (G3P) and ammonia. The ammonia is provided by the PdxT subunit. Can also use ribulose 5-phosphate and dihydroxyacetone phosphate as substrates, resulting from enzyme-catalyzed isomerization of RBP and G3P, respectively. The chain is Pyridoxal 5'-phosphate synthase subunit PdxS from Methanococcus vannielii (strain ATCC 35089 / DSM 1224 / JCM 13029 / OCM 148 / SB).